The primary structure comprises 819 residues: Leucine--tRNA ligase (819 aa).

The 'HIGH' region motif lies at 40 to 51 (PYPSGAGLHVGH). The 'KMSKS' region motif lies at 600-604 (KMSKS). Lysine 603 provides a ligand contact to ATP.

It belongs to the class-I aminoacyl-tRNA synthetase family.

Its subcellular location is the cytoplasm. The catalysed reaction is tRNA(Leu) + L-leucine + ATP = L-leucyl-tRNA(Leu) + AMP + diphosphate. The protein is Leucine--tRNA ligase of Chlamydia trachomatis serovar L2 (strain ATCC VR-902B / DSM 19102 / 434/Bu).